Consider the following 286-residue polypeptide: Interferon-induced 35 kDa protein homolog (286 aa).

The interval 5-26 is leucine-zipper; it reads LQTVLYSLQEEQARLKMRLQEL. NID domains lie at 81-170 and 183-266; these read ALVT…GDVE and FADE…GEVE.

It belongs to the NMI family. Homodimer. Also interacts with B-ATF. Interacts with TRIM21. Interacts (via NID domains) with NMI (via NID domains); the interaction is direct and is facilitated by TRIM21. Phosphorylated. Dephosphorylation correlates with the formation of a complex with NMI.

It localises to the cytoplasm. It is found in the nucleus. The protein resides in the secreted. Its function is as follows. Acts as a signaling pathway regulator involved in innate immune system response. In response to interferon IFN-alpha, associates in a complex with transcriptional regulator NMI to regulate immune response; the complex formation prevents proteasome-mediated degradation of IFI35 and correlates with IFI35 dephosphorylation. In complex with NMI, inhibits virus-triggered type I interferon/IFN-beta production. In complex with NMI, negatively regulates nuclear factor NF-kappa-B signaling by inhibiting the nuclear translocation, activation and transcription of the NF-kappa-B subunit p65/RELA, resulting in the inhibition of endothelial cell proliferation, migration and re-endothelialization of injured arteries. Beside its role as an intracellular signaling pathway regulator, also functions extracellularly as damage-associated molecular patterns (DAMPs) to promote inflammation when actively released by macrophage to the extracellular space during cell injury and pathogen invasion. Macrophage-secreted IFI35 activates NF-kappa-B signaling in adjacent macrophages through Toll-like receptor 4/TLR4 activation, thereby inducing NF-kappa-B translocation from the cytoplasm into the nucleus which promotes the release of pro-inflammatory cytokines. This is Interferon-induced 35 kDa protein homolog from Mus musculus (Mouse).